Consider the following 194-residue polypeptide: Exopolysaccharide II synthesis transcriptional activator ExpG (194 aa).

Residues 49-184 enclose the HTH marR-type domain; it reads YFELARVMER…AFQTLHRLEL (136 aa).

Its function is as follows. Transcriptional activator of genes for galactoglucan synthesis (exopolysaccharide II or EPS II). This chain is Exopolysaccharide II synthesis transcriptional activator ExpG (expG), found in Rhizobium meliloti (strain 1021) (Ensifer meliloti).